The following is a 4699-amino-acid chain: Fat-like cadherin-related tumor suppressor homolog (4699 aa).

The first 38 residues, 1–38 (MFTMKIKKYVTPVKRKAFTILQWISLLCSLWLIPTVQS), serve as a signal peptide directing secretion. Topologically, residues 39-4285 (KADEKHTATL…KNFSIEHISG (4247 aa)) are extracellular. 34 Cadherin domains span residues 63-183 (SHSV…SPLF), 184-291 (YPTQ…APEI), 288-400 (APEI…IPIF), 401-507 (TQEI…DPIF), 508-613 (ENVN…RPQF), 614-716 (ERVN…SSIL), 773-877 (VNFP…RPVI), 878-980 (QKTL…APVF), 981-1088 (GVQE…APEF), 1089-1198 (DDFV…KPVY), 1194-1299 (DKPV…SPEF), 1300-1405 (DQRV…APLI), 1408-1506 (KTSE…PPQF), 1507-1612 (AKDV…HPEF), 1613-1717 (TAKI…PPKF), 1718-1815 (PTNN…IPYF), 1816-1932 (VQNE…PPVF), 1933-2033 (NERE…NFAF), 2034-2140 (QRES…CPLF), 2141-2241 (VNMP…MPVF), 2242-2341 (EKQF…YPEI), 2342-2449 (ESDI…APCF), 2450-2551 (VEPS…SPLF), 2552-2654 (DQST…VPYF), 2655-2763 (LLKE…IPTF), 2764-2860 (EKSS…YPKF), 2861-2967 (DNTF…APVF), 2968-3072 (KLPI…KPRY), 3068-3169 (LKPR…MPIF), 3170-3273 (SMAQ…PPEF), 3274-3378 (SMRQ…SPTF), 3379-3483 (LQNL…APIF), 3484-3588 (SSSN…PPIV), and 3589-3696 (TPLE…VIRF). Residues Asn-68 and Asn-159 are each glycosylated (N-linked (GlcNAc...) asparagine). The N-linked (GlcNAc...) asparagine glycan is linked to Asn-367. Asn-782, Asn-846, and Asn-926 each carry an N-linked (GlcNAc...) asparagine glycan. Asn-1109, Asn-1201, Asn-1315, Asn-1442, Asn-1476, and Asn-1514 each carry an N-linked (GlcNAc...) asparagine glycan. 19 disulfide bridges follow: Cys-3807-Cys-3819, Cys-3814-Cys-3851, Cys-3853-Cys-3862, Cys-3869-Cys-3880, Cys-3874-Cys-3891, Cys-3893-Cys-3902, Cys-4071-Cys-4105, Cys-4117-Cys-4128, Cys-4122-Cys-4138, Cys-4140-Cys-4149, Cys-4156-Cys-4167, Cys-4161-Cys-4177, Cys-4179-Cys-4188, Cys-4194-Cys-4205, Cys-4199-Cys-4214, Cys-4216-Cys-4224, Cys-4231-Cys-4242, Cys-4236-Cys-4251, and Cys-4253-Cys-4262. One can recognise an EGF-like 1 domain in the interval 3865–3903 (TVNACSTDPCSPQRICMPSGSALGYQCVCPKGFSGTYCE). The Laminin G-like domain occupies 3921–4105 (AVSFGGKSYA…KRFTNVEFKC (185 aa)). EGF-like domains lie at 4113–4150 (RLGI…KHCE), 4152–4189 (DLDP…KRCE), 4190–4225 (YGKF…PTCE), and 4227–4263 (DVDE…ASCG). Residues 4286–4306 (IISGVAVVLVIISCVLCCVVL) traverse the membrane as a helical segment. The Cytoplasmic portion of the chain corresponds to 4307-4699 (KRSSSSKRRN…EFLPQQQTNN (393 aa)).

In terms of tissue distribution, localizes where basal actin filaments terminate.

It is found in the cell membrane. Its function is as follows. Required for the planar polarity of actin filament orientation at the basal side of ovarian follicle cells. Required for proper egg chamber shape and elongation of the egg chamber during oogenesis. Required for the correct planar polarization of Rab10 within the basal follicle cell epithelium and is therefore indirectly involved in the Rab10-dependent remodeling of the basal membrane during egg chamber elongation. The protein is Fat-like cadherin-related tumor suppressor homolog (kug) of Drosophila melanogaster (Fruit fly).